Reading from the N-terminus, the 102-residue chain is Protein YcgL (102 aa).

The YcgL domain occupies 14–98 (MFCVIYRSSK…PPEDLLKQHL (85 aa)).

The chain is Protein YcgL from Salmonella agona (strain SL483).